A 192-amino-acid chain; its full sequence is MKYAPLSRDEGRTLVKIARMAIEEHLRGSKNLRLPDDLPDVFRQRRGVFVTLEKKGNLRGCIGYPEPVKPLIDALIEAAISAATGDPRFPPVKPEELDDIDVEVSVLTPPEPLEVESPADYPSLIRVGVDGLIVERGWARGLLLPQVATEWGWDAEEFLCNTCMKAGLPPDCFYDPETRVYRFQAQIFHEDG.

Residues 9 to 192 (DEGRTLVKIA…FQAQIFHEDG (184 aa)) form the AMMECR1 domain.

The polypeptide is Protein MTH_857 (Methanothermobacter thermautotrophicus (strain ATCC 29096 / DSM 1053 / JCM 10044 / NBRC 100330 / Delta H) (Methanobacterium thermoautotrophicum)).